The primary structure comprises 89 residues: Small ribosomal subunit protein uS15 (89 aa).

Belongs to the universal ribosomal protein uS15 family. In terms of assembly, part of the 30S ribosomal subunit. Forms a bridge to the 50S subunit in the 70S ribosome, contacting the 23S rRNA.

Functionally, one of the primary rRNA binding proteins, it binds directly to 16S rRNA where it helps nucleate assembly of the platform of the 30S subunit by binding and bridging several RNA helices of the 16S rRNA. Its function is as follows. Forms an intersubunit bridge (bridge B4) with the 23S rRNA of the 50S subunit in the ribosome. This chain is Small ribosomal subunit protein uS15, found in Pediococcus pentosaceus (strain ATCC 25745 / CCUG 21536 / LMG 10740 / 183-1w).